We begin with the raw amino-acid sequence, 120 residues long: NAD(P)H-quinone oxidoreductase subunit 3 (120 aa).

A run of 3 helical transmembrane segments spans residues 6-26 (GYDA…LALV), 64-84 (MFAL…PWAV), and 89-109 (LGLL…VALA).

It belongs to the complex I subunit 3 family. NDH-1 can be composed of about 15 different subunits; different subcomplexes with different compositions have been identified which probably have different functions.

The protein resides in the cellular thylakoid membrane. It catalyses the reaction a plastoquinone + NADH + (n+1) H(+)(in) = a plastoquinol + NAD(+) + n H(+)(out). It carries out the reaction a plastoquinone + NADPH + (n+1) H(+)(in) = a plastoquinol + NADP(+) + n H(+)(out). NDH-1 shuttles electrons from an unknown electron donor, via FMN and iron-sulfur (Fe-S) centers, to quinones in the respiratory and/or the photosynthetic chain. The immediate electron acceptor for the enzyme in this species is believed to be plastoquinone. Couples the redox reaction to proton translocation, and thus conserves the redox energy in a proton gradient. Cyanobacterial NDH-1 also plays a role in inorganic carbon-concentration. The polypeptide is NAD(P)H-quinone oxidoreductase subunit 3 (Prochlorococcus marinus (strain MIT 9313)).